The following is a 57-amino-acid chain: UPF0391 membrane protein RB0084 (57 aa).

The next 2 helical transmembrane spans lie at 4 to 24 and 33 to 53; these read WALI…SGVS and ILFY…LAVG.

The protein belongs to the UPF0391 family.

It localises to the cell membrane. In Rhizobium meliloti (strain 1021) (Ensifer meliloti), this protein is UPF0391 membrane protein RB0084.